The chain runs to 256 residues: Ubiquinone biosynthesis O-methyltransferase (256 aa).

Residues R44, G80, D101, and M144 each coordinate S-adenosyl-L-methionine.

The protein belongs to the methyltransferase superfamily. UbiG/COQ3 family.

The enzyme catalyses a 3-demethylubiquinol + S-adenosyl-L-methionine = a ubiquinol + S-adenosyl-L-homocysteine + H(+). The catalysed reaction is a 3-(all-trans-polyprenyl)benzene-1,2-diol + S-adenosyl-L-methionine = a 2-methoxy-6-(all-trans-polyprenyl)phenol + S-adenosyl-L-homocysteine + H(+). It participates in cofactor biosynthesis; ubiquinone biosynthesis. Functionally, O-methyltransferase that catalyzes the 2 O-methylation steps in the ubiquinone biosynthetic pathway. This chain is Ubiquinone biosynthesis O-methyltransferase, found in Methylocella silvestris (strain DSM 15510 / CIP 108128 / LMG 27833 / NCIMB 13906 / BL2).